Reading from the N-terminus, the 304-residue chain is Acetyl-coenzyme A carboxylase carboxyl transferase subunit beta (304 aa).

Residues 23-292 enclose the CoA carboxyltransferase N-terminal domain; it reads VWTKCDSCGQ…PNPEAPREGV (270 aa). Cys-27, Cys-30, Cys-46, and Cys-49 together coordinate Zn(2+). The C4-type zinc finger occupies 27–49; the sequence is CDSCGQVLYRAELERNLEVCPKC. Residues 284–304 form a disordered region; it reads NPEAPREGVVVPPVPDQEPEA. The segment covering 295–304 has biased composition (pro residues); it reads PPVPDQEPEA.

It belongs to the AccD/PCCB family. As to quaternary structure, acetyl-CoA carboxylase is a heterohexamer composed of biotin carboxyl carrier protein (AccB), biotin carboxylase (AccC) and two subunits each of ACCase subunit alpha (AccA) and ACCase subunit beta (AccD). The cofactor is Zn(2+).

The protein resides in the cytoplasm. The enzyme catalyses N(6)-carboxybiotinyl-L-lysyl-[protein] + acetyl-CoA = N(6)-biotinyl-L-lysyl-[protein] + malonyl-CoA. It functions in the pathway lipid metabolism; malonyl-CoA biosynthesis; malonyl-CoA from acetyl-CoA: step 1/1. Component of the acetyl coenzyme A carboxylase (ACC) complex. Biotin carboxylase (BC) catalyzes the carboxylation of biotin on its carrier protein (BCCP) and then the CO(2) group is transferred by the transcarboxylase to acetyl-CoA to form malonyl-CoA. In Shigella flexneri, this protein is Acetyl-coenzyme A carboxylase carboxyl transferase subunit beta.